We begin with the raw amino-acid sequence, 426 residues long: MLDPALLRQHPADLAERLRSTRSFDLNIAELELLESERKRIQVRTQELQSQRNSKSKAIGQAKAKGEDVAALMAEVAGFGDELKASEEALDAIRAKLEGIALGLPNLPAEDVPLGKDESENVEQSRWGTPRQFDFAVKDHVELGAPHGWLDGETAAKLSGARFTVLRGPVARLHRALAQFMLDLHVGEHGYEETNVPLLVNADSMRGTGQLPKFEDDLFQTEVGESRRYLIPTSEVPLTNIVRDEIIDAERLPLRMTAHSMCFRAEAGSGGRDTRGMIRQHQFEKVELVTACAPEDSDAEHQRMTRCAEVVLEQLGLPYRKVLLCTGDMGFSAIKTYDLEVWLPSQNTYREISSCSNCGDFQARRMQARWRNPVSGKPELLHTLNGSGTAVGRAMIAVMENYQNADGSIDVPQVLRPYMGGLERIG.

233–235 lines the L-serine pocket; that stretch reads TSE. 264 to 266 contributes to the ATP binding site; it reads RAE. L-serine is bound at residue glutamate 287. 351-354 is a binding site for ATP; it reads EISS. Serine 387 is a binding site for L-serine.

It belongs to the class-II aminoacyl-tRNA synthetase family. Type-1 seryl-tRNA synthetase subfamily. In terms of assembly, homodimer. The tRNA molecule binds across the dimer.

It is found in the cytoplasm. The catalysed reaction is tRNA(Ser) + L-serine + ATP = L-seryl-tRNA(Ser) + AMP + diphosphate + H(+). It carries out the reaction tRNA(Sec) + L-serine + ATP = L-seryl-tRNA(Sec) + AMP + diphosphate + H(+). It participates in aminoacyl-tRNA biosynthesis; selenocysteinyl-tRNA(Sec) biosynthesis; L-seryl-tRNA(Sec) from L-serine and tRNA(Sec): step 1/1. Catalyzes the attachment of serine to tRNA(Ser). Is also able to aminoacylate tRNA(Sec) with serine, to form the misacylated tRNA L-seryl-tRNA(Sec), which will be further converted into selenocysteinyl-tRNA(Sec). This Xanthomonas euvesicatoria pv. vesicatoria (strain 85-10) (Xanthomonas campestris pv. vesicatoria) protein is Serine--tRNA ligase.